The chain runs to 479 residues: Anaerobic nitric oxide reductase flavorubredoxin (479 aa).

Residues L30–I210 form a zinc metallo-hydrolase region. Residues H79, E81, D83, H147, D166, and H227 each coordinate Fe cation. The Flavodoxin-like domain occupies I254 to A393. Residues T260–N264 and A342–L369 each bind FMN. One can recognise a Rubredoxin-like domain in the interval G423–L474. 4 residues coordinate Fe cation: C428, C431, C461, and C464.

In the N-terminal section; belongs to the zinc metallo-hydrolase group 3 family. In terms of assembly, homotetramer. Fe cation serves as cofactor. It depends on FMN as a cofactor.

Its subcellular location is the cytoplasm. It participates in nitrogen metabolism; nitric oxide reduction. Anaerobic nitric oxide reductase; uses NADH to detoxify nitric oxide (NO), protecting several 4Fe-4S NO-sensitive enzymes. Has at least 2 reductase partners, only one of which (NorW, flavorubredoxin reductase) has been identified. NO probably binds to the di-iron center; electrons enter from the NorW at rubredoxin and are transferred sequentially to the FMN center and the di-iron center. Also able to function as an aerobic oxygen reductase. This Salmonella paratyphi B (strain ATCC BAA-1250 / SPB7) protein is Anaerobic nitric oxide reductase flavorubredoxin.